The following is a 239-amino-acid chain: MDMKKRLMLELRNRKAADAKELVLDNCRSDDGKIIGLTSEFESLEFLSMINVNLLSVANLPKLPKLKKLELSDNRISGGLEVLAERTPNLTHLNLSGNKIKEINTLEPLKKLPHLMSLDLFNCEVTMLNNYRESVFELLPKLTFLDGFDADDQEAPDSDPEAEDLEENGEDGEEDEEDDEEEEEFEDELDDEDEDEEGEEEEDGEEEDEDDEDVPQGEKRKRDLSDEGEEEEEDDEDDE.

LRR repeat units follow at residues 16–40 (AADAKELVLDNCRSDDGKIIGLTSE), 43–64 (SLEFLSMINVNLLSVANLPKLP), 65–87 (KLKKLELSDNRISGGLEVLAERT), and 89–110 (NLTHLNLSGNKIKEINTLEPLK). The LRRCT domain occupies 123–165 (CEVTMLNNYRESVFELLPKLTFLDGFDADDQEAPDSDPEAEDL). A compositionally biased stretch (acidic residues) spans 149–215 (DADDQEAPDS…EEDEDDEDVP (67 aa)). The segment at 149–239 (DADDQEAPDS…EEEEDDEDDE (91 aa)) is disordered. Residues 216-225 (QGEKRKRDLS) are compositionally biased toward basic and acidic residues. Residues 226–239 (DEGEEEEEDDEDDE) are compositionally biased toward acidic residues.

It belongs to the ANP32 family.

Its subcellular location is the nucleus. Multifunctional protein working as a cell cycle progression factor as well as a cell survival factor. Required for the progression from the G1 to the S phase. Anti-apoptotic protein which functions as a caspase-3 inhibitor. Has no phosphatase 2A (PP2A) inhibitor activity. Exhibits histone chaperone properties, stimulating core histones to assemble into a nucleosome. This chain is Acidic leucine-rich nuclear phosphoprotein 32 family member B (anp32b), found in Xenopus laevis (African clawed frog).